The following is a 784-amino-acid chain: Melanoma-associated antigen D1 (784 aa).

The interval 41-67 (PTNQATAAASGPNASPQSSQPPSANEV) is disordered. Positions 47 to 65 (AAASGPNASPQSSQPPSAN) are enriched in low complexity. Tyr97 is modified (phosphotyrosine). 4 stretches are compositionally biased toward polar residues: residues 195–214 (PTAETQTQNINQAKMATSQA), 232–246 (AQTSADGSQAQNLES), 259–269 (NNLNVEESSSG), and 306–320 (LAWQNPSGWQNQPAR). A disordered region spans residues 195-339 (PTAETQTQNI…PARQTPPAWQ (145 aa)). 19 tandem repeats follow at residues 302 to 307 (WQTPLA), 308 to 313 (WQNPSG), 314 to 319 (WQNQPA), 338 to 343 (WQNPVA), 344 to 349 (WQNPVI), 350 to 355 (WPNPVI), 356 to 361 (WQNPVI), 362 to 367 (WPNPIV), 368 to 373 (WPGPVV), 374 to 379 (WPNPLA), 380 to 385 (WQNPPG), 386 to 391 (WQTPPG), 392 to 397 (WQTPPG), 398 to 403 (WQGPPD), 404 to 409 (WQGPPD), 410 to 415 (WPLPPD), 416 to 421 (WPLPPD), 422 to 427 (WPLPTD), and 428 to 433 (WPLPPD). Residues 302–450 (WQTPLAWQNP…VPPDWQNLRP (149 aa)) are 22 X 6 AA tandem repeats of W-[PQ]-X-P-X-X. The disordered stretch occupies residues 379–418 (AWQNPPGWQTPPGWQTPPGWQGPPDWQGPPDWPLPPDWPL). Residues 383–403 (PPGWQTPPGWQTPPGWQGPPD) are compositionally biased toward low complexity. Over residues 404–418 (WQGPPDWPLPPDWPL) the composition is skewed to pro residues. A 20; approximate repeat occupies 434–438 (WIPTD). Tandem repeats lie at residues 439–444 (WPVPPD) and 445–450 (WQNLRP). The disordered stretch occupies residues 441–471 (VPPDWQNLRPSPNLRPSPNSRASQNLGASQP). Low complexity predominate over residues 447-461 (NLRPSPNLRPSPNSR). An MAGE domain is found at 477 to 675 (LQERANKLVK…RDWTAQFMEA (199 aa)).

Interacts with DLX5, DLX7 and MSX2 and forms homomultimers. Interacts with UNC5A. Interacts with TRIM28 and PJA1. Interacts with NGFR/p75NTR and RORA.

The protein localises to the cytoplasm. It is found in the cell membrane. The protein resides in the nucleus. Its function is as follows. Involved in the apoptotic response after nerve growth factor (NGF) binding in neuronal cells. Inhibits cell cycle progression, and facilitates NGFR-mediated apoptosis. May act as a regulator of the function of DLX family members. May enhance ubiquitin ligase activity of RING-type zinc finger-containing E3 ubiquitin-protein ligases. Proposed to act through recruitment and/or stabilization of the Ubl-conjugating enzyme (E2) at the E3:substrate complex. Plays a role in the circadian rhythm regulation. May act as RORA co-regulator, modulating the expression of core clock genes such as BMAL1 and NFIL3, induced, or NR1D1, repressed. This Sus scrofa (Pig) protein is Melanoma-associated antigen D1 (MAGED1).